The following is a 145-amino-acid chain: Peptide methionine sulfoxide reductase MsrB (145 aa).

Residues 6–129 (EEELKQTLTD…NAAALRFVPV (124 aa)) enclose the MsrB domain. Catalysis depends on C118, which acts as the Nucleophile.

Belongs to the MsrB Met sulfoxide reductase family.

It catalyses the reaction L-methionyl-[protein] + [thioredoxin]-disulfide + H2O = L-methionyl-(R)-S-oxide-[protein] + [thioredoxin]-dithiol. This is Peptide methionine sulfoxide reductase MsrB from Enterococcus faecalis (strain ATCC 700802 / V583).